The primary structure comprises 206 residues: Small ribosomal subunit protein uS5 (206 aa).

Residues 1 to 15 (MTDTPTKQEIQSKND) show a composition bias toward polar residues. Residues 1–50 (MTDTPTKQEIQSKNDNVPGATPVEQKKNNRNDRKRNRRGDSKNLERDSDW) are disordered. The span at 38 to 50 (RGDSKNLERDSDW) shows a compositional bias: basic and acidic residues. Positions 50 to 113 (WQERVVQIRR…SDGKKNLVRV (64 aa)) constitute an S5 DRBM domain.

This sequence belongs to the universal ribosomal protein uS5 family. In terms of assembly, part of the 30S ribosomal subunit. Contacts proteins S4 and S8.

With S4 and S12 plays an important role in translational accuracy. Functionally, located at the back of the 30S subunit body where it stabilizes the conformation of the head with respect to the body. The chain is Small ribosomal subunit protein uS5 from Prochlorococcus marinus (strain MIT 9301).